The sequence spans 240 residues: UDP-2,3-diacylglucosamine hydrolase (240 aa).

Mn(2+) is bound by residues aspartate 8, histidine 10, aspartate 41, asparagine 79, and histidine 114. 79-80 serves as a coordination point for substrate; the sequence is NR. Residues aspartate 122, serine 160, asparagine 164, lysine 167, and histidine 195 each contribute to the substrate site. Mn(2+)-binding residues include histidine 195 and histidine 197.

Belongs to the LpxH family. The cofactor is Mn(2+).

The protein localises to the cell inner membrane. The catalysed reaction is UDP-2-N,3-O-bis[(3R)-3-hydroxytetradecanoyl]-alpha-D-glucosamine + H2O = 2-N,3-O-bis[(3R)-3-hydroxytetradecanoyl]-alpha-D-glucosaminyl 1-phosphate + UMP + 2 H(+). It participates in glycolipid biosynthesis; lipid IV(A) biosynthesis; lipid IV(A) from (3R)-3-hydroxytetradecanoyl-[acyl-carrier-protein] and UDP-N-acetyl-alpha-D-glucosamine: step 4/6. Functionally, hydrolyzes the pyrophosphate bond of UDP-2,3-diacylglucosamine to yield 2,3-diacylglucosamine 1-phosphate (lipid X) and UMP by catalyzing the attack of water at the alpha-P atom. Involved in the biosynthesis of lipid A, a phosphorylated glycolipid that anchors the lipopolysaccharide to the outer membrane of the cell. The chain is UDP-2,3-diacylglucosamine hydrolase from Yersinia pestis bv. Antiqua (strain Angola).